We begin with the raw amino-acid sequence, 210 residues long: Ribosomal RNA small subunit methyltransferase G (210 aa).

S-adenosyl-L-methionine-binding positions include G76, L81, 127–128 (VE), and R142.

This sequence belongs to the methyltransferase superfamily. RNA methyltransferase RsmG family.

It is found in the cytoplasm. The catalysed reaction is guanosine(527) in 16S rRNA + S-adenosyl-L-methionine = N(7)-methylguanosine(527) in 16S rRNA + S-adenosyl-L-homocysteine. Specifically methylates the N7 position of guanine in position 527 of 16S rRNA. In Vibrio atlanticus (strain LGP32) (Vibrio splendidus (strain Mel32)), this protein is Ribosomal RNA small subunit methyltransferase G.